The following is a 152-amino-acid chain: Succinate dehydrogenase [ubiquinone] cytochrome b small subunit, mitochondrial (152 aa).

The N-terminal 21 residues, 1–21, are a transit peptide targeting the mitochondrion; sequence MATLLRVSSLCRANRASAFKS. At 22–56 the chain is on the mitochondrial matrix side; the sequence is LLIRPVPCLTQDHHMVQTSQIHTSPNHHAGSKAAS. The chain crosses the membrane as a helical span at residues 57–78; sequence MHWTSERALSVALLGLLPAAYL. Residues 79–83 are Mitochondrial intermembrane-facing; sequence YPGAA. The helical transmembrane segment at 84–104 threads the bilayer; sequence MDYSLAAALTLHGHWGLGQVV. Histidine 95 is a heme b binding site. At 105–113 the chain is on the mitochondrial matrix side; that stretch reads TDYVHGDAK. Tyrosine 107 is a binding site for a ubiquinone. Residues 114-135 traverse the membrane as a helical segment; that stretch reads IKMANTSLFALSALTFAGLCYF. The Mitochondrial intermembrane segment spans residues 136–152; it reads NYHDVGICKAVSMLWSL.

It belongs to the CybS family. As to quaternary structure, component of complex II composed of four subunits: the flavoprotein (FP) SDHA, iron-sulfur protein (IP) SDHB, and a cytochrome b560 composed of SDHC and SDHD.

The protein resides in the mitochondrion inner membrane. It functions in the pathway carbohydrate metabolism; tricarboxylic acid cycle. In terms of biological role, membrane-anchoring subunit of succinate dehydrogenase (SDH) that is involved in complex II of the mitochondrial electron transport chain and is responsible for transferring electrons from succinate to ubiquinone (coenzyme Q). SDH also oxidizes malate to the non-canonical enol form of oxaloacetate, enol-oxaloacetate. Enol-oxaloacetate, which is a potent inhibitor of the succinate dehydrogenase activity, is further isomerized into keto-oxaloacetate. The sequence is that of Succinate dehydrogenase [ubiquinone] cytochrome b small subunit, mitochondrial (sdhd) from Xenopus tropicalis (Western clawed frog).